Reading from the N-terminus, the 613-residue chain is Dihydroxy-acid dehydratase (613 aa).

A Mg(2+)-binding site is contributed by Asp-81. Residue Cys-122 coordinates [2Fe-2S] cluster. Residues Asp-123 and Lys-124 each contribute to the Mg(2+) site. Lys-124 bears the N6-carboxylysine mark. Cys-193 is a binding site for [2Fe-2S] cluster. Position 489 (Glu-489) interacts with Mg(2+). Ser-515 (proton acceptor) is an active-site residue.

This sequence belongs to the IlvD/Edd family. As to quaternary structure, homodimer. [2Fe-2S] cluster is required as a cofactor. It depends on Mg(2+) as a cofactor.

The catalysed reaction is (2R)-2,3-dihydroxy-3-methylbutanoate = 3-methyl-2-oxobutanoate + H2O. It catalyses the reaction (2R,3R)-2,3-dihydroxy-3-methylpentanoate = (S)-3-methyl-2-oxopentanoate + H2O. The protein operates within amino-acid biosynthesis; L-isoleucine biosynthesis; L-isoleucine from 2-oxobutanoate: step 3/4. Its pathway is amino-acid biosynthesis; L-valine biosynthesis; L-valine from pyruvate: step 3/4. Its function is as follows. Functions in the biosynthesis of branched-chain amino acids. Catalyzes the dehydration of (2R,3R)-2,3-dihydroxy-3-methylpentanoate (2,3-dihydroxy-3-methylvalerate) into 2-oxo-3-methylpentanoate (2-oxo-3-methylvalerate) and of (2R)-2,3-dihydroxy-3-methylbutanoate (2,3-dihydroxyisovalerate) into 2-oxo-3-methylbutanoate (2-oxoisovalerate), the penultimate precursor to L-isoleucine and L-valine, respectively. This Pseudomonas fluorescens (strain SBW25) protein is Dihydroxy-acid dehydratase.